The sequence spans 742 residues: Zinc finger MYND domain-containing protein 15 (742 aa).

The segment at 109 to 199 (LEDGEEGEEE…QKRKGQRSEA (91 aa)) is disordered. Residues 110-127 (EDGEEGEEEEEEDEEEEK) are compositionally biased toward acidic residues. The segment covering 151–161 (SRESPQETNPP) has biased composition (polar residues). Over residues 166-189 (EAAREAGGGKDGCREDRVENETRP) the composition is skewed to basic and acidic residues. 8 residues coordinate Zn(2+): Cys-313, Cys-316, Cys-328, Cys-331, Cys-337, Cys-341, His-355, and Cys-359. Residues 313–359 (CHVCHRHSFEAKLTPCPQCSAVLYCGEACLRADWQRCPDDVSHRFWC) form an MYND-type zinc finger. Disordered stretches follow at residues 565–590 (EVSV…GRRD) and 701–742 (QGSG…RRRK). Residues 708–724 (APGPPPPSPTPSAPPAP) are compositionally biased toward pro residues. The span at 725 to 742 (TRRRRGEKKPGRGARRRK) shows a compositional bias: basic residues.

As to quaternary structure, interacts with HDAC1, HDAC3, HDAC6 and, to a lesser extent, with HDAC7.

It is found in the nucleus. The protein resides in the cytoplasm. In terms of biological role, acts as a transcriptional repressor through interaction with histone deacetylases (HDACs). May be important for spermiogenesis. This chain is Zinc finger MYND domain-containing protein 15 (ZMYND15), found in Homo sapiens (Human).